Consider the following 642-residue polypeptide: Threonine--tRNA ligase (642 aa).

One can recognise a TGS domain in the interval 1–61 (MPVITLPDGS…DTDSELSIIT (61 aa)). The interval 243 to 534 (DHRKIGKQLD…LIEEYAGKFP (292 aa)) is catalytic. Cysteine 334, histidine 385, and histidine 511 together coordinate Zn(2+).

The protein belongs to the class-II aminoacyl-tRNA synthetase family. As to quaternary structure, homodimer. The cofactor is Zn(2+).

The protein localises to the cytoplasm. The catalysed reaction is tRNA(Thr) + L-threonine + ATP = L-threonyl-tRNA(Thr) + AMP + diphosphate + H(+). In terms of biological role, catalyzes the attachment of threonine to tRNA(Thr) in a two-step reaction: L-threonine is first activated by ATP to form Thr-AMP and then transferred to the acceptor end of tRNA(Thr). Also edits incorrectly charged L-seryl-tRNA(Thr). This chain is Threonine--tRNA ligase, found in Shewanella piezotolerans (strain WP3 / JCM 13877).